Consider the following 265-residue polypeptide: MPLPVALQTRLAKRGILKHLEPEPEEEIIAEDYDDDPVDYEATRLEGLPPSWYKVFDPSCGLPYYWNADTDLVSWLSPHDPNSVVTKSAKKLRSSNADAEEKLDRSHDKSDRGHDKSDRSHEKLDRGHDKSDRGHDKSDRDRERGYDKVDRERERDRERDRDRGYDKADREEGKERRHHRREELAPYPKSKKAVSRKDEELDPMDPSSYSDAPRGTWSTGLPKRNEAKTGADTTAAGPLFQQRPYPSPGAVLRANAEASRTKQQD.

A WW domain is found at 46–80 (EGLPPSWYKVFDPSCGLPYYWNADTDLVSWLSPHD). Ser94 carries the post-translational modification Phosphoserine. The interval 94 to 265 (SSNADAEEKL…AEASRTKQQD (172 aa)) is disordered. The segment covering 99 to 175 (AEEKLDRSHD…DKADREEGKE (77 aa)) has biased composition (basic and acidic residues). 15 repeat units span residues 104 to 110 (DRSHDKS), 111 to 117 (DRGHDKS), 118 to 124 (DRSHEKL), 125 to 131 (DRGHDKS), 132 to 138 (DRGHDKS), 139 to 140 (DR), 141 to 142 (DR), 143 to 144 (ER), 150 to 151 (DR), 152 to 153 (ER), 154 to 155 (ER), 156 to 157 (DR), 158 to 159 (ER), 160 to 161 (DR), and 162 to 163 (DR). Positions 104 to 138 (DRSHDKSDRGHDKSDRSHEKLDRGHDKSDRGHDKS) are 5 X 7 AA approximate tandem repeats of D-R-[SG]-H-D-K-S. Residues 139-144 (DRDRER) are 3 X 2 AA tandem repeats of [DE]-R. A 7 X 2 AA tandem repeats of [DE]-R region spans residues 150-163 (DRERERDRERDRDR). The segment at 245–255 (YPSPGAVLRAN) is important for interaction with TXNL4A. Ser247 is modified (phosphoserine).

As to quaternary structure, interacts with POU3F2/Brn-2, ATXN1, TXNL4A, HTT and AR. Interaction with ATXN1 correlates positively with the length of the polyglutamine tract. Interacts with RNA polymerase II large subunit in a phosphorylation-dependent manner. Forms a ternary complex with ATXN1 mutant and phosphorylated RNA polymerase II. Interacts (via C-terminus) with TXNL4A and CD2BP2. Interacts (via WW domain) with ATN1 and SF3B1, and may interact with additional splice factors. Interacts (via WW domain) with WBP11; Leading to reduce interaction between PQBP1 and TXNL4A. Interacts with CAPRIN1. Interacts with DDX1. Interacts with SFPQ. Interacts with KHSRP.

The protein localises to the nucleus. It is found in the nucleus speckle. Its subcellular location is the cytoplasmic granule. Intrinsically disordered protein that acts as a scaffold, and which is involved in different processes, such as pre-mRNA splicing, transcription regulation, innate immunity and neuron development. Interacts with splicing-related factors via the intrinsically disordered region and regulates alternative splicing of target pre-mRNA species. May suppress the ability of POU3F2 to transactivate the DRD1 gene in a POU3F2 dependent manner. Can activate transcription directly or via association with the transcription machinery. May be involved in ATXN1 mutant-induced cell death. The interaction with ATXN1 mutant reduces levels of phosphorylated RNA polymerase II large subunit. Involved in the assembly of cytoplasmic stress granule, possibly by participating in the transport of neuronal RNA granules. Also acts as an innate immune sensor of infection by retroviruses, by detecting the presence of reverse-transcribed DNA in the cytosol. Directly binds retroviral reverse-transcribed DNA in the cytosol and interacts with CGAS, leading to activate the cGAS-STING signaling pathway, triggering type-I interferon production. The polypeptide is Polyglutamine-binding protein 1 (PQBP1) (Gorilla gorilla gorilla (Western lowland gorilla)).